The following is a 307-amino-acid chain: UDP-3-O-acyl-N-acetylglucosamine deacetylase (307 aa).

Zn(2+)-binding residues include H79, H239, and D243. H266 acts as the Proton donor in catalysis.

It belongs to the LpxC family. It depends on Zn(2+) as a cofactor.

It catalyses the reaction a UDP-3-O-[(3R)-3-hydroxyacyl]-N-acetyl-alpha-D-glucosamine + H2O = a UDP-3-O-[(3R)-3-hydroxyacyl]-alpha-D-glucosamine + acetate. The protein operates within glycolipid biosynthesis; lipid IV(A) biosynthesis; lipid IV(A) from (3R)-3-hydroxytetradecanoyl-[acyl-carrier-protein] and UDP-N-acetyl-alpha-D-glucosamine: step 2/6. Its function is as follows. Catalyzes the hydrolysis of UDP-3-O-myristoyl-N-acetylglucosamine to form UDP-3-O-myristoylglucosamine and acetate, the committed step in lipid A biosynthesis. This Tolumonas auensis (strain DSM 9187 / NBRC 110442 / TA 4) protein is UDP-3-O-acyl-N-acetylglucosamine deacetylase.